We begin with the raw amino-acid sequence, 700 residues long: Phosphoribosylformylglycinamidine synthase subunit PurL (700 aa).

Histidine 34 is a catalytic residue. Tyrosine 37 is a binding site for ATP. Mg(2+) is bound at residue glutamate 79. Substrate is bound by residues 80-83 and arginine 102; that span reads SHNH. Histidine 81 functions as the Proton acceptor in the catalytic mechanism. Aspartate 103 provides a ligand contact to Mg(2+). Glutamine 227 lines the substrate pocket. Aspartate 255 serves as a coordination point for Mg(2+). Residue 299–301 participates in substrate binding; the sequence is ESQ. Aspartate 476 and glycine 513 together coordinate ATP. Asparagine 514 lines the Mg(2+) pocket. Serine 516 lines the substrate pocket.

It belongs to the FGAMS family. As to quaternary structure, monomer. Part of the FGAM synthase complex composed of 1 PurL, 1 PurQ and 2 PurS subunits.

The protein resides in the cytoplasm. It carries out the reaction N(2)-formyl-N(1)-(5-phospho-beta-D-ribosyl)glycinamide + L-glutamine + ATP + H2O = 2-formamido-N(1)-(5-O-phospho-beta-D-ribosyl)acetamidine + L-glutamate + ADP + phosphate + H(+). The protein operates within purine metabolism; IMP biosynthesis via de novo pathway; 5-amino-1-(5-phospho-D-ribosyl)imidazole from N(2)-formyl-N(1)-(5-phospho-D-ribosyl)glycinamide: step 1/2. Its function is as follows. Part of the phosphoribosylformylglycinamidine synthase complex involved in the purines biosynthetic pathway. Catalyzes the ATP-dependent conversion of formylglycinamide ribonucleotide (FGAR) and glutamine to yield formylglycinamidine ribonucleotide (FGAM) and glutamate. The FGAM synthase complex is composed of three subunits. PurQ produces an ammonia molecule by converting glutamine to glutamate. PurL transfers the ammonia molecule to FGAR to form FGAM in an ATP-dependent manner. PurS interacts with PurQ and PurL and is thought to assist in the transfer of the ammonia molecule from PurQ to PurL. This chain is Phosphoribosylformylglycinamidine synthase subunit PurL, found in Halobacterium salinarum (strain ATCC 29341 / DSM 671 / R1).